Here is a 57-residue protein sequence, read N- to C-terminus: uncharacterized protein (57 aa).

A helical membrane pass occupies residues 34–54 (AALLDAAALVVIPGLLTAAAV).

It localises to the membrane. This is an uncharacterized protein from Dictyostelium discoideum (Social amoeba).